An 85-amino-acid polypeptide reads, in one-letter code: Senescence-associated and QQS-related protein (85 aa).

The segment covering 1–24 (MSFRKVEKKPTEMGRNMTHEKSDS) has biased composition (basic and acidic residues). Disordered stretches follow at residues 1-35 (MSFR…PMTV) and 55-85 (SGKA…FPNY). Over residues 58-77 (ARSNYNLTGTAKGTGPINSF) the composition is skewed to polar residues.

As to expression, expressed predominantly within leaves and cotyledons vasculatures. Mainly observed in fully expanded leaves, at the base of mature inflorescences, in senescing leaves and cauline leaves, and, to a lower extent, in hypocotyls and rosette leaves prior to flowering.

Its function is as follows. Plays a role in carbon allocation, including during senescence and stresses, thus impacting starch accumulation. This Arabidopsis thaliana (Mouse-ear cress) protein is Senescence-associated and QQS-related protein.